Here is a 75-residue protein sequence, read N- to C-terminus: Large ribosomal subunit protein bL31 (75 aa).

The Zn(2+) site is built by Cys16, Cys18, Cys38, and Cys41.

This sequence belongs to the bacterial ribosomal protein bL31 family. Type A subfamily. As to quaternary structure, part of the 50S ribosomal subunit. The cofactor is Zn(2+).

In terms of biological role, binds the 23S rRNA. The protein is Large ribosomal subunit protein bL31 of Mycolicibacterium smegmatis (strain ATCC 700084 / mc(2)155) (Mycobacterium smegmatis).